The primary structure comprises 299 residues: Probable lipid kinase YegS-like (299 aa).

A DAGKc domain is found at 2–133 (EKNPITLLIL…IDIAKVNDGH (132 aa)). ATP contacts are provided by residues Thr-40, 66–72 (GDGTVNE), and Thr-95. Mg(2+) is bound by residues Leu-215, Asp-218, and Leu-220. Glu-271 acts as the Proton acceptor in catalysis.

Belongs to the diacylglycerol/lipid kinase family. YegS lipid kinase subfamily. Mg(2+) serves as cofactor. The cofactor is Ca(2+).

It is found in the cytoplasm. Probably phosphorylates lipids; the in vivo substrate is unknown. The polypeptide is Probable lipid kinase YegS-like (Pectobacterium atrosepticum (strain SCRI 1043 / ATCC BAA-672) (Erwinia carotovora subsp. atroseptica)).